The primary structure comprises 364 residues: 4-hydroxy-3-methylbut-2-en-1-yl diphosphate synthase (flavodoxin) (364 aa).

[4Fe-4S] cluster contacts are provided by C268, C271, C303, and E310.

This sequence belongs to the IspG family. [4Fe-4S] cluster serves as cofactor.

The catalysed reaction is (2E)-4-hydroxy-3-methylbut-2-enyl diphosphate + oxidized [flavodoxin] + H2O + 2 H(+) = 2-C-methyl-D-erythritol 2,4-cyclic diphosphate + reduced [flavodoxin]. It functions in the pathway isoprenoid biosynthesis; isopentenyl diphosphate biosynthesis via DXP pathway; isopentenyl diphosphate from 1-deoxy-D-xylulose 5-phosphate: step 5/6. In terms of biological role, converts 2C-methyl-D-erythritol 2,4-cyclodiphosphate (ME-2,4cPP) into 1-hydroxy-2-methyl-2-(E)-butenyl 4-diphosphate. The polypeptide is 4-hydroxy-3-methylbut-2-en-1-yl diphosphate synthase (flavodoxin) (Desulfotalea psychrophila (strain LSv54 / DSM 12343)).